A 133-amino-acid polypeptide reads, in one-letter code: p53 and DNA damage-regulated protein 1 (133 aa).

The protein belongs to the prefoldin subunit beta family. In terms of assembly, component of the PAQosome complex which is responsible for the biogenesis of several protein complexes and which consists of R2TP complex members RUVBL1, RUVBL2, RPAP3 and PIH1D1, URI complex members PFDN2, PFDN6, PDRG1, UXT and URI1 as well as ASDURF, POLR2E and DNAAF10/WDR92. Predominantly expressed in normal testis and exhibits reduced but detectable expression in other organs.

The protein resides in the cytoplasm. Functionally, may play a role in chaperone-mediated protein folding. The sequence is that of p53 and DNA damage-regulated protein 1 (PDRG1) from Homo sapiens (Human).